The chain runs to 325 residues: DNA-directed RNA polymerase subunit alpha (325 aa).

Residues 1 to 231 (MQTSLLKPKI…DQLSVFAALE (231 aa)) form an alpha N-terminal domain (alpha-NTD) region. The interval 246-325 (IDPILLRPVD…ENWPPAGLDK (80 aa)) is alpha C-terminal domain (alpha-CTD).

It belongs to the RNA polymerase alpha chain family. Homodimer. The RNAP catalytic core consists of 2 alpha, 1 beta, 1 beta' and 1 omega subunit. When a sigma factor is associated with the core the holoenzyme is formed, which can initiate transcription.

The enzyme catalyses RNA(n) + a ribonucleoside 5'-triphosphate = RNA(n+1) + diphosphate. Functionally, DNA-dependent RNA polymerase catalyzes the transcription of DNA into RNA using the four ribonucleoside triphosphates as substrates. The protein is DNA-directed RNA polymerase subunit alpha of Burkholderia orbicola (strain MC0-3).